Consider the following 397-residue polypeptide: MTTLLNPYFGEFGGMYVPQILMPALRQLEEAFVSAQKDPEFQAQFADLLKNYAGRPTALTKCQNITAGTRTTLYLKREDLLHGGAHKTNQVLGQALLAKRMGKSEIIAETGAGQHGVASALASALLGLKCRIYMGAKDVERQSPNVFRMRLMGAQVIPVHSGSATLKDACNEALRDWSGSYETAHYMLGTAAGPHPYPTIVREFQRMIGEETKSQILDKEGRLPDAVIACVGGGSNAIGMFADFINDASVGLIGVEPGGHGIETGEHGAPLKHGRVGIYFGMKAPMMQTADGQIEESYSISAGLDFPSVGPQHAHLNSIGRADYVSITDDEALEAFKTLCRHEGIIPALESSHALAHALKMMREHPEKEQLLVVNLSGRGDKDIFTVHDILKARGEI.

At K87 the chain carries N6-(pyridoxal phosphate)lysine.

Belongs to the TrpB family. Tetramer of two alpha and two beta chains. It depends on pyridoxal 5'-phosphate as a cofactor.

It carries out the reaction (1S,2R)-1-C-(indol-3-yl)glycerol 3-phosphate + L-serine = D-glyceraldehyde 3-phosphate + L-tryptophan + H2O. Its pathway is amino-acid biosynthesis; L-tryptophan biosynthesis; L-tryptophan from chorismate: step 5/5. Functionally, the beta subunit is responsible for the synthesis of L-tryptophan from indole and L-serine. The protein is Tryptophan synthase beta chain of Salmonella arizonae (strain ATCC BAA-731 / CDC346-86 / RSK2980).